Reading from the N-terminus, the 73-residue chain is Translational regulator CsrA (73 aa).

This sequence belongs to the CsrA/RsmA family. Homodimer; the beta-strands of each monomer intercalate to form a hydrophobic core, while the alpha-helices form wings that extend away from the core.

The protein resides in the cytoplasm. Functionally, a translational regulator that binds mRNA to regulate translation initiation and/or mRNA stability. Usually binds in the 5'-UTR at or near the Shine-Dalgarno sequence preventing ribosome-binding, thus repressing translation. Its main target seems to be the major flagellin gene, while its function is anatagonized by FliW. This chain is Translational regulator CsrA, found in Lachnospira eligens (strain ATCC 27750 / DSM 3376 / VPI C15-48 / C15-B4) (Eubacterium eligens).